The following is a 198-amino-acid chain: Small ribosomal subunit protein uS4 (198 aa).

The 64-residue stretch at 91-154 (SRLDNVVYRL…KNLNIVQEAL (64 aa)) folds into the S4 RNA-binding domain.

Belongs to the universal ribosomal protein uS4 family. As to quaternary structure, part of the 30S ribosomal subunit. Contacts protein S5. The interaction surface between S4 and S5 is involved in control of translational fidelity.

In terms of biological role, one of the primary rRNA binding proteins, it binds directly to 16S rRNA where it nucleates assembly of the body of the 30S subunit. Its function is as follows. With S5 and S12 plays an important role in translational accuracy. The sequence is that of Small ribosomal subunit protein uS4 from Aster yellows witches'-broom phytoplasma (strain AYWB).